The following is a 974-amino-acid chain: MTRTDPPDLLVSTVYQDIKVVDPGLTSKRQPCERSVARPAAPTPFNKRHCRSFDFLEALDEPTMETHPEPPPPEPAPPRARPRDSEPRRRTRSKSAPRASQGLATAPASPPVLQRRGREAQRAVRVEGSPRREPSYPALRALANELHPIKLQPQRGGPGRIAPLCATPGRCAPPEPPSGPVPHVRCRLDIKPDEAVLQHAARSSRSCAPRETTSWARTAPQFHGLTVPGPRHVALSRTPTPSDLYCTDPRTLYCDGPLPGPRDYLEHRSQPFTTPPGPTQFFYTEEPEGYAGSFTTSPGLPFDGYCSRPYLSEEPPRPSPRRGGSYYAGEVRTFPIQEPPSRSYYGETTRAYGMPFVPRYVPEEPRAHPGARTFYTEDFGRYRERDVLARTYPHPRSSPPWADWGPRPYRTLQVMPPPAPGPLLASWHGGTGTSPPRLATDSRHYSRSWDNILAPGPRREDPLGRGRSYENLLGREVRDTRGSSPEGRRPPVVVNLSTSPRRYAALSLSETSLTEKGRAGESLGRNWYVTPEITITDNDLRSVDRPTAKGWELPGGRPRQPVSTVPEGPASSRQRSLEQLDELITDLVIDSRSPAQAPEPAAEGLGRQLRRLLDSRAAGPGGATLLAPSRSPPASAGSTEEPTGSGEAADASPEPSADEDDLMTCSNARCRRTETMFNACLYFKSCHSCYTYYCSRLCRREDWDAHKARCVYGRVGSVCRHVLQFCRDSSPVHRAFSRIARVGFLSRGRGVLFLGFPSPGSADNFLRFGLEGLLLSPTYLSLRELATHAAPLGSYARELAAAGRLYEPAECFLLSVSVAVGPSAAPPGAAARPAPRTPGPTVRKFAKVALAAGSPTRPPPARGGEPDMETLILTPPPGTAGLDEEGEAGRRAREVAFIHIQRELRMRGVFLRHEFPRVYEQLCEFVEANRRFTPTTIYPTDRRTGRPFMCMIMAASEPRALDWVASANLLDDIM.

Disordered regions lie at residues 23-137 (PGLT…PSYP), 201-233 (ARSS…PRHV), and 306-326 (CSRP…GGSY). Ser-52 is modified (phosphoserine). Pro residues predominate over residues 69–79 (EPPPPEPAPPR). Over residues 116–134 (RGREAQRAVRVEGSPRREP) the composition is skewed to basic and acidic residues. Position 129 is a phosphoserine (Ser-129). Residues 201 to 216 (ARSSRSCAPRETTSWA) are compositionally biased toward polar residues. Residue Arg-322 is modified to Omega-N-methylarginine. A phosphoserine mark is found at Ser-468, Ser-509, and Ser-512. The disordered stretch occupies residues 539-576 (DLRSVDRPTAKGWELPGGRPRQPVSTVPEGPASSRQRS). Position 593 is a phosphoserine (Ser-593). Positions 618 to 661 (AGPGGATLLAPSRSPPASAGSTEEPTGSGEAADASPEPSADEDD) are disordered. A compositionally biased stretch (low complexity) spans 623-636 (ATLLAPSRSPPASA). An Asymmetric dimethylarginine; alternate modification is found at Arg-749. Arg-749 carries the omega-N-methylarginine; alternate modification.

It is found in the apical cell membrane. The protein resides in the cell projection. The protein localises to the cilium. It localises to the cell junction. Its subcellular location is the adherens junction. Its function is as follows. May be involved in the control of adherens junction integrity. This Mus musculus (Mouse) protein is Apical junction component 1 homolog (Ajm1).